The primary structure comprises 412 residues: Divalent metal cation transporter MntH (412 aa).

The Cytoplasmic portion of the chain corresponds to 1 to 19 (MTNYRVESSSGRAARKMRL). A helical membrane pass occupies residues 20-39 (ALMGPAFIAAIGYIDPGNFA). Topologically, residues 40–51 (TNIQAGASFGYQ) are periplasmic. The chain crosses the membrane as a helical span at residues 52 to 71 (LLWVVVWANLMAMLIQILSA). Residues 72-95 (KLGIATGKNLAEQIRDHYPRPVVW) are Cytoplasmic-facing. Residues 96–118 (FYWVQAEIIAMATDLAEFIGAAI) traverse the membrane as a helical segment. The Periplasmic portion of the chain corresponds to 119-125 (GFKLILG). The helical transmembrane segment at 126-145 (VSLLQGAVLTGIATFLILML) threads the bilayer. Topologically, residues 146-155 (QRRGQKPLEK) are cytoplasmic. Residues 156–175 (VIGGLLLFVAAAYIVELIFS) form a helical membrane-spanning segment. Over 176 to 196 (QPNLAQLGKGMVIPSLPTSEA) the chain is Periplasmic. The helical transmembrane segment at 197-220 (VFLAAGVLGATIMPHVIYLHSSLT) threads the bilayer. Topologically, residues 221–238 (QHLHGGSRQQRYSATKWD) are cytoplasmic. The helical transmembrane segment at 239 to 258 (VAIAMTIAGFVNLAMMATAA) threads the bilayer. Over 259-276 (AAFHFSGHTGVADLDEAY) the chain is Periplasmic. The helical transmembrane segment at 277-297 (LTLQPLLSHAAATVFGLSLVA) threads the bilayer. Residues 298–327 (AGLSSTVVGTLAGQVVMQGFIRFHIPLWVR) lie on the Cytoplasmic side of the membrane. Residues 328-344 (RTVTMLPSFIVILMGLD) form a helical membrane-spanning segment. At 345 to 350 (PTRILV) the chain is on the periplasmic side. Residues 351–370 (MSQVLLSFGIALALVPLLIF) traverse the membrane as a helical segment. Topologically, residues 371–387 (TSDSKLMGDLVNSKRVK) are cytoplasmic. Residues 388-406 (QTGWVIVVLVVALNIWLLV) traverse the membrane as a helical segment. At 407–412 (GTALGL) the chain is on the periplasmic side.

This sequence belongs to the NRAMP family.

It localises to the cell inner membrane. H(+)-stimulated, divalent metal cation uptake system. This chain is Divalent metal cation transporter MntH, found in Escherichia fergusonii (strain ATCC 35469 / DSM 13698 / CCUG 18766 / IAM 14443 / JCM 21226 / LMG 7866 / NBRC 102419 / NCTC 12128 / CDC 0568-73).